The sequence spans 145 residues: Large ribosomal subunit protein bL17 (145 aa).

The interval 123 to 145 (KRVDRKKKDPAKDKTEEKKLATA) is disordered.

It belongs to the bacterial ribosomal protein bL17 family. Part of the 50S ribosomal subunit. Contacts protein L32.

The sequence is that of Large ribosomal subunit protein bL17 from Pelagibacter ubique (strain HTCC1062).